Reading from the N-terminus, the 159-residue chain is MKLNEIKDNEGSSKDRIRVGRGIGSGKGKTGGRGVKGQKARSGVAVNGFEGGQMPIYRRLPKRGFNNIFASEFTTVSLGRIQTAIDAGKLDASATIDAAALKAAGVIRRLKDGVRVLGDGELTTKVTIEVAGASKPAVEKIEKAGGTIKQLSAAAEKSE.

Positions 1 to 18 are enriched in basic and acidic residues; the sequence is MKLNEIKDNEGSSKDRIR. The segment at 1–39 is disordered; the sequence is MKLNEIKDNEGSSKDRIRVGRGIGSGKGKTGGRGVKGQK. Positions 21-35 are enriched in gly residues; sequence RGIGSGKGKTGGRGV.

It belongs to the universal ribosomal protein uL15 family. Part of the 50S ribosomal subunit.

In terms of biological role, binds to the 23S rRNA. This Allorhizobium ampelinum (strain ATCC BAA-846 / DSM 112012 / S4) (Agrobacterium vitis (strain S4)) protein is Large ribosomal subunit protein uL15.